The chain runs to 286 residues: Thymidylate synthase (286 aa).

Residues Arg-21 and 136–137 (RR) contribute to the dUMP site. The active-site Nucleophile is Cys-156. DUMP is bound by residues 176–179 (RSVD), Asn-187, and 217–219 (HIY). (6R)-5,10-methylene-5,6,7,8-tetrahydrofolate is bound at residue Asp-179. Ala-285 lines the (6R)-5,10-methylene-5,6,7,8-tetrahydrofolate pocket.

Belongs to the thymidylate synthase family. In terms of assembly, homodimer.

The catalysed reaction is dUMP + (6R)-5,10-methylene-5,6,7,8-tetrahydrofolate = 7,8-dihydrofolate + dTMP. It functions in the pathway pyrimidine metabolism; dTTP biosynthesis. This chain is Thymidylate synthase (TD), found in Enterobacteria phage T4 (Bacteriophage T4).